A 1449-amino-acid polypeptide reads, in one-letter code: Disease resistance protein RPP5 (1449 aa).

The TIR domain maps to arginine 10–leucine 178. Glutamate 85 is a catalytic residue. Residues glutamate 192–valine 446 enclose the NB-ARC domain. LRR repeat units follow at residues methionine 549–proline 573, leucine 574–alanine 595, tyrosine 597–leucine 618, glycine 619–arginine 642, leucine 644–alanine 665, methionine 687–proline 710, lysine 712–valine 732, glutamate 733–leucine 755, glycine 756–isoleucine 779, alanine 802–leucine 825, glutamate 826–cysteine 849, leucine 915–threonine 939, leucine 941–leucine 962, glutamine 963–leucine 985, serine 986–tryptophan 1011, alanine 1028–leucine 1052, glutamine 1053–serine 1077, serine 1096–phenylalanine 1119, and threonine 1120–leucine 1143.

Interacts with RSH1.

It catalyses the reaction NAD(+) + H2O = ADP-D-ribose + nicotinamide + H(+). TIR-NB-LRR receptor-like protein that confers resistance to the pathogen Hyaloperonospora arabidopsis isolate Noco2 (downy mildew disease). Confers resistance to H.arabidopsis isolates Emoy2, Emwa1 and Noco2. The polypeptide is Disease resistance protein RPP5 (Arabidopsis thaliana (Mouse-ear cress)).